We begin with the raw amino-acid sequence, 135 residues long: Peptide methionine sulfoxide reductase MsrB (135 aa).

One can recognise a MsrB domain in the interval 9–131; it reads DDYWRSKLTD…NSASIQFEEE (123 aa). Zn(2+) is bound by residues cysteine 48, cysteine 51, cysteine 97, and cysteine 100. The active-site Nucleophile is the cysteine 120.

Belongs to the MsrB Met sulfoxide reductase family. Zn(2+) is required as a cofactor.

It carries out the reaction L-methionyl-[protein] + [thioredoxin]-disulfide + H2O = L-methionyl-(R)-S-oxide-[protein] + [thioredoxin]-dithiol. In Teredinibacter turnerae (strain ATCC 39867 / T7901), this protein is Peptide methionine sulfoxide reductase MsrB.